We begin with the raw amino-acid sequence, 419 residues long: L-rhamnose isomerase (419 aa).

Mn(2+) is bound by residues His-262, Asp-294, and Asp-296.

It belongs to the rhamnose isomerase family. As to quaternary structure, homotetramer. The cofactor is Mn(2+).

The protein localises to the cytoplasm. The catalysed reaction is L-rhamnopyranose = L-rhamnulose. It participates in carbohydrate degradation; L-rhamnose degradation; glycerone phosphate from L-rhamnose: step 1/3. In terms of biological role, catalyzes the interconversion of L-rhamnose and L-rhamnulose. The chain is L-rhamnose isomerase from Shigella sonnei (strain Ss046).